The chain runs to 424 residues: MAKQIQAIRGMNDILPTQSPLWQKLETVLRETVAAYGYSEIRTPIVESTDLFKRSIGEVTDIVEKEMYTFDDRNGDSLTLRPEGTASTVRAGNEHGLLYNQEQRLWYMGPMFRHERPQKGRYRQFNQFGVEVYGIGTADVDAEVLMLSARLWEKLGIKEHVTLELNTLGDPAERATYRSALIEFLEQFKEQLDEESQRRMYTNPLRVLDTKNPEVQALLVDAPELMDFLGEESRAHFSHLCELLDAVGIQYVINPRLVRGLDYYNRTVFEWVTSSLGSQGTVLAGGRYDGLVEQLGGKDTPAVGFAMGLERIVLLLETLELTSDIPSTVDVYVTAMGDTSKIEAIKIAQTLRSELPNLRVMSHCGGGNFKKQMKRADKSGAQIALVIGEDELANNQVAVKYLREKKEQELVARDGLATYIAKQI.

It belongs to the class-II aminoacyl-tRNA synthetase family. As to quaternary structure, homodimer.

The protein localises to the cytoplasm. The catalysed reaction is tRNA(His) + L-histidine + ATP = L-histidyl-tRNA(His) + AMP + diphosphate + H(+). The protein is Histidine--tRNA ligase of Shewanella woodyi (strain ATCC 51908 / MS32).